The sequence spans 763 residues: Actin filament-associated protein 1-like 1 (763 aa).

Positions 83-137 are disordered; that stretch reads LQDMPEDEAESCKAASPEPAKSPSLRHTADLPPPLPNRPPPEDYYEEALPLGPGK. 3 positions are modified to phosphoserine: serine 98, serine 104, and serine 153. The tract at residues 169 to 210 is disordered; it reads TRMNGELKNSYNDSDAMSSSYESYDEEEEEGKGPQPTHQWPS. Residues 175 to 185 show a composition bias toward polar residues; sequence LKNSYNDSDAM. The PH 1 domain maps to 220 to 316; the sequence is DCRICAFLLR…WLKVIREVSK (97 aa). A phosphoserine mark is found at serine 329 and serine 343. The segment at 343-380 is disordered; sequence SQEKQTSDSDSLGMGDSCSTLGREHGKGKKSSLSELKG. The PH 2 domain occupies 413-507; that stretch reads EVPCCGYLNV…WLGLLLVEMG (95 aa). Position 552 is a phosphotyrosine (tyrosine 552). The disordered stretch occupies residues 561-604; that stretch reads QDEEPERPPGAQVKRHASTCSEKSHRVDPQVKVKRHASSAHQYK. A compositionally biased stretch (basic and acidic residues) spans 582 to 591; the sequence is EKSHRVDPQV. Residues 606 to 694 adopt a coiled-coil conformation; the sequence is GKNRAEEDAR…LVTVKERLQQ (89 aa). The segment covering 712 to 724 has biased composition (polar residues); sequence SGETANKPQNNVP. The interval 712-763 is disordered; the sequence is SGETANKPQNNVPEQPLPVNCVSELRKRSPSIINSNQGRVLQKAKEWEMKKT. Serine 742 carries the post-translational modification Phosphoserine. Basic and acidic residues predominate over residues 754–763; sequence KAKEWEMKKT.

Interacts with CTTN.

It localises to the cytoplasm. The protein resides in the cell projection. It is found in the podosome. Its subcellular location is the invadopodium. The protein localises to the cytoskeleton. It localises to the stress fiber. Functionally, may be involved in podosome and invadosome formation. The chain is Actin filament-associated protein 1-like 1 (AFAP1L1) from Bos taurus (Bovine).